The primary structure comprises 298 residues: Probable oxidoreductase (298 aa).

9–33 lines the NAD(+) pocket; it reads VVTGGASGLGAETVRALAAAGAEVT. Ser139 serves as a coordination point for substrate. The Proton acceptor role is filled by Tyr165.

This sequence belongs to the short-chain dehydrogenases/reductases (SDR) family.

The protein is Probable oxidoreductase of Streptomyces antibioticus.